Here is a 360-residue protein sequence, read N- to C-terminus: GTPase Obg (360 aa).

An Obg domain is found at Met1 to Ile156. The region spanning Ala157 to Pro360 is the OBG-type G domain. GTP contacts are provided by residues Gly163–Ser170, Phe188–Val192, Asp210–Gly213, Asn279–Asp282, and Ser341–Val343. 2 residues coordinate Mg(2+): Ser170 and Thr190.

The protein belongs to the TRAFAC class OBG-HflX-like GTPase superfamily. OBG GTPase family. Monomer. It depends on Mg(2+) as a cofactor.

Its subcellular location is the cytoplasm. An essential GTPase which binds GTP, GDP and possibly (p)ppGpp with moderate affinity, with high nucleotide exchange rates and a fairly low GTP hydrolysis rate. Plays a role in control of the cell cycle, stress response, ribosome biogenesis and in those bacteria that undergo differentiation, in morphogenesis control. This Helicobacter acinonychis (strain Sheeba) protein is GTPase Obg.